A 222-amino-acid chain; its full sequence is UPF0502 protein Shewmr4_1554 (222 aa).

Positions 175-193 (SLSADSPSAGSNSLNAQDR) are enriched in polar residues. The disordered stretch occupies residues 175-194 (SLSADSPSAGSNSLNAQDRQ).

Belongs to the UPF0502 family.

The protein is UPF0502 protein Shewmr4_1554 of Shewanella sp. (strain MR-4).